The following is a 257-amino-acid chain: Snake venom serine protease nikobin (257 aa).

The first 18 residues, 1-18 (MVLIRVLANLLLLQLSYA), serve as a signal peptide directing secretion. A propeptide spanning residues 19 to 24 (QKSSEL) is cleaved from the precursor. The 224-residue stretch at 25 to 248 (VIGGDECNIN…YSDWIQSIIA (224 aa)) folds into the Peptidase S1 domain. Disulfide bonds link Cys31-Cys162, Cys49-Cys65, Cys97-Cys255, Cys141-Cys209, Cys173-Cys188, and Cys199-Cys224. Catalysis depends on charge relay system residues His64 and Asp109. N-linked (GlcNAc...) asparagine glycans are attached at residues Asn120 and Asn121. Ser203 (charge relay system) is an active-site residue. Asn250 is a glycosylation site (N-linked (GlcNAc...) asparagine).

It belongs to the peptidase S1 family. Snake venom subfamily. As to quaternary structure, monomer. Expressed by the venom gland.

It is found in the secreted. Snake venom serine protease that may act in the hemostasis system of the prey. This is Snake venom serine protease nikobin (sp-VN) from Vipera nikolskii (Nikolsky's adder).